A 479-amino-acid chain; its full sequence is MNFETIIGLEVHVELNTNSKIFSPSSAHFGEDPNANTNVIDWSFPGVLPVLNKGVVDAGIKAALALNMDIHKDMHFDRKNYFYPDNPKAYQISQFDEPIGYNGWIEIELEDGSTKKIRIERAHLEEDAGKNTHGTDGYSYVDLNRQGVPLIEIVSEADMRSPEEAYAYLTALKEIIQYTGISDVKMEEGSMRVDANISLRPYGQEKFGTKTELKNLNSFNYVRKGLQHEVERQAKILRSGGQIQQETRRYDESTGETILMRVKEGSADYRYFPEPDLPLYEIDDSWIEEVRAELPVFPKARRAHYVENLGLTAYDAGQLTSTKALSDFFEAAVAAGGDAKQVSNWLQGEVAQFLNAEGKTIEQIALTPENLVEMIALIADGTISSKIAKKVFVHLAKEGGSAKAYVEKAGLVQISDPAVLIPIIHQVFADNEAAVADFKSGKRNADKAFTGFLMKATKGQANPQVAQQLLAQELAKLLD.

It belongs to the GatB/GatE family. GatB subfamily. Heterotrimer of A, B and C subunits.

The enzyme catalyses L-glutamyl-tRNA(Gln) + L-glutamine + ATP + H2O = L-glutaminyl-tRNA(Gln) + L-glutamate + ADP + phosphate + H(+). It catalyses the reaction L-aspartyl-tRNA(Asn) + L-glutamine + ATP + H2O = L-asparaginyl-tRNA(Asn) + L-glutamate + ADP + phosphate + 2 H(+). Allows the formation of correctly charged Asn-tRNA(Asn) or Gln-tRNA(Gln) through the transamidation of misacylated Asp-tRNA(Asn) or Glu-tRNA(Gln) in organisms which lack either or both of asparaginyl-tRNA or glutaminyl-tRNA synthetases. The reaction takes place in the presence of glutamine and ATP through an activated phospho-Asp-tRNA(Asn) or phospho-Glu-tRNA(Gln). In Streptococcus suis (strain 98HAH33), this protein is Aspartyl/glutamyl-tRNA(Asn/Gln) amidotransferase subunit B.